We begin with the raw amino-acid sequence, 598 residues long: Probable ATP-dependent RNA helicase DDX52 (598 aa).

Position 15 is an N6-acetyllysine (K15). The residue at position 39 (S39) is a Phosphoserine. The disordered stretch occupies residues 59–98; the sequence is CGGLQTQQELQNEETTEGGLLERSKEPKKKKRKKMTADVP. Positions 166 to 194 match the Q motif motif; that stretch reads QLDQEYKISPRLLQNILDAGFQVPTPIQM. Residues 197–375 enclose the Helicase ATP-binding domain; sequence IPVMLHGREL…KLNLDNIVSV (179 aa). 210–217 serves as a coordination point for ATP; it reads APTGSGKT. Residues 319-322 carry the DEAD box motif; it reads DESD. In terms of domain architecture, Helicase C-terminal spans 386–547; sequence TVEQELLFVG…PVPEYIKGFQ (162 aa). Residues 578–598 are disordered; it reads AKQKKVAGQNSKKKETLKGKS. Residues 589 to 598 are compositionally biased toward basic and acidic residues; that stretch reads KKKETLKGKS.

The protein belongs to the DEAD box helicase family. DDX52/ROK1 subfamily.

The protein resides in the nucleus. The protein localises to the nucleolus. The enzyme catalyses ATP + H2O = ADP + phosphate + H(+). Functionally, required for efficient ribosome biogenesis. May control cell cycle progression by regulating translation of mRNAs that contain a terminal oligo pyrimidine (TOP) motif in their 5' UTRs, such as GTPBP4. The chain is Probable ATP-dependent RNA helicase DDX52 (Ddx52) from Rattus norvegicus (Rat).